We begin with the raw amino-acid sequence, 666 residues long: Frizzled-3 (666 aa).

A signal peptide spans 1–22 (MAVSWIVFDLWLLTVFLGQIGG). One can recognise an FZ domain in the interval 23–136 (HSLFSCEPIT…CSRFPDCDEP (114 aa)). Residues 23-205 (HSLFSCEPIT…REELSFARYF (183 aa)) lie on the Extracellular side of the membrane. Disulfide bonds link Cys28-Cys89, Cys36-Cys82, Cys73-Cys110, Cys99-Cys133, and Cys103-Cys127. Asn42 carries N-linked (GlcNAc...) asparagine glycosylation. The chain crosses the membrane as a helical span at residues 206–226 (IGLISIICLSATLFTFLTFLI). The Cytoplasmic segment spans residues 227–237 (DVTRFRYPERP). A helical transmembrane segment spans residues 238 to 258 (IIFYAVCYMMVSLIFFIGFLL). Residues 259–288 (EDRVACNASSPAQYKASTVTQGSHNKACTM) lie on the Extracellular side of the membrane. Asn265 carries N-linked (GlcNAc...) asparagine glycosylation. A helical membrane pass occupies residues 289 to 309 (LFMVLYFFTMAGSVWWVILTI). Over 310 to 328 (TWFLAAVPKWGSEAIEKKA) the chain is Cytoplasmic. Residues 329 to 349 (LLFHASAWGIPGTLTIILLAM) traverse the membrane as a helical segment. Residues 350 to 374 (NKIEGDNISGVCFVGLYDVDALRYF) lie on the Extracellular side of the membrane. N-linked (GlcNAc...) asparagine glycosylation is present at Asn356. The chain crosses the membrane as a helical span at residues 375–395 (VLAPLCLYVVVGVSLLLAGII). Residues 396–420 (SLNRVRIEIPLEKENQDKLVKFMIR) are Cytoplasmic-facing. Residues 421–441 (IGVFSILYLVPLLVVIGCYFY) form a helical membrane-spanning segment. Residues 442–477 (EQAYRGIWETTWIQERCREYHIPCPYQVTQMSRPDL) are Extracellular-facing. A helical membrane pass occupies residues 478–498 (ILFLMKYLMALIVGIPSIFWV). The Cytoplasmic portion of the chain corresponds to 499–666 (GSKKTCFEWA…RVIEEDGTSA (168 aa)). The Lys-Thr-X-X-X-Trp motif, mediates interaction with the PDZ domain of Dvl family members motif lies at 502–507 (KTCFEW). The tract at residues 538–666 (RDPNTPIIRK…RVIEEDGTSA (129 aa)) is disordered. Positions 550–565 (GTSTQGTSTHASSTQL) are enriched in polar residues. Basic and acidic residues predominate over residues 617–638 (LTDHSRHSSSHRLNEQSRHSSI). The span at 639 to 656 (RDLSNNPMTHITHGTSMN) shows a compositional bias: polar residues.

It belongs to the G-protein coupled receptor Fz/Smo family. As to quaternary structure, interacts with VANGL2. In terms of processing, ubiquitinated by ZNRF3, leading to its degradation by the proteasome. As to expression, expressed in the cortex, diencephalon, rostral brainstem and little or no staining is seen in the striatum or cerebellum. Expressed in both hair cells and supporting cells in the utricle, saccule, cristae and the organ of Corti in the inner ear (at protein level). Highly expressed in the CNS. In skin, it is restricted to the epidermis and to the developing hair follicle.

The protein localises to the membrane. Its subcellular location is the cell membrane. It localises to the cell surface. The protein resides in the apical cell membrane. Functionally, receptor for Wnt proteins. Most of frizzled receptors are coupled to the beta-catenin canonical signaling pathway, which leads to the activation of disheveled proteins, inhibition of GSK-3 kinase, nuclear accumulation of beta-catenin and activation of Wnt target genes. A second signaling pathway involving PKC and calcium fluxes has been seen for some family members, but it is not yet clear if it represents a distinct pathway or if it can be integrated in the canonical pathway, as PKC seems to be required for Wnt-mediated inactivation of GSK-3 kinase. Both pathways seem to involve interactions with G-proteins. Activation by Wnt5A stimulates PKC activity via a G-protein-dependent mechanism. Involved in transduction and intercellular transmission of polarity information during tissue morphogenesis and/or in differentiated tissues. Plays a role in controlling early axon growth and guidance processes necessary for the formation of a subset of central and peripheral major fiber tracts. Required for the development of major fiber tracts in the central nervous system, including: the anterior commissure, the corpus callosum, the thalamocortical, corticothalamic and nigrostriatal tracts, the corticospinal tract, the fasciculus retroflexus, the mammillothalamic tract, the medial lemniscus, and ascending fiber tracts from the spinal cord to the brain. In the peripheral nervous system, controls axon growth in distinct populations of cranial and spinal motor neurons, including the facial branchimotor nerve, the hypoglossal nerve, the phrenic nerve, and motor nerves innervating dorsal limbs. Involved in the migration of cranial neural crest cells. May also be implicated in the transmission of sensory information from the trunk and limbs to the brain. Controls commissural sensory axons guidance after midline crossing along the anterior-posterior axis in the developing spinal cord in a Wnt-dependent signaling pathway. Together with FZD6, is involved in the neural tube closure and plays a role in the regulation of the establishment of planar cell polarity (PCP), particularly in the orientation of asymmetric bundles of stereocilia on the apical faces of a subset of auditory and vestibular sensory cells located in the inner ear. Promotes neurogenesis by maintaining sympathetic neuroblasts within the cell cycle in a beta-catenin-dependent manner. The sequence is that of Frizzled-3 (Fzd3) from Mus musculus (Mouse).